The sequence spans 130 residues: Small ribosomal subunit protein uS11c (130 aa).

This sequence belongs to the universal ribosomal protein uS11 family. Part of the 30S ribosomal subunit.

It localises to the plastid. It is found in the chloroplast. The polypeptide is Small ribosomal subunit protein uS11c (Oedogonium cardiacum (Filamentous green alga)).